We begin with the raw amino-acid sequence, 347 residues long: 4-hydroxy-2-oxovalerate aldolase 2 (347 aa).

The Pyruvate carboxyltransferase domain maps to 9 to 259; it reads ITIVDTTLRD…DTGVDLFPLI (251 aa). Substrate-binding positions include 17-18, serine 171, and histidine 198; that span reads RD. A Mn(2+)-binding site is contributed by aspartate 18. The Mn(2+) site is built by histidine 198 and histidine 200. Substrate is bound at residue tyrosine 289.

This sequence belongs to the 4-hydroxy-2-oxovalerate aldolase family.

The enzyme catalyses (S)-4-hydroxy-2-oxopentanoate = acetaldehyde + pyruvate. The protein is 4-hydroxy-2-oxovalerate aldolase 2 of Rhodococcus opacus (strain B4).